Consider the following 224-residue polypeptide: UPF0758 protein PSPPH_0210 (224 aa).

The MPN domain occupies A102–M224. The Zn(2+) site is built by H173, H175, and D186. Positions H173–D186 match the JAMM motif motif.

This sequence belongs to the UPF0758 family.

The sequence is that of UPF0758 protein PSPPH_0210 from Pseudomonas savastanoi pv. phaseolicola (strain 1448A / Race 6) (Pseudomonas syringae pv. phaseolicola (strain 1448A / Race 6)).